Reading from the N-terminus, the 197-residue chain is Inner membrane protein RclC (197 aa).

Residues 1-15 (MEKYLHLLSRGDKIG) are Periplasmic-facing. The chain crosses the membrane as a helical span at residues 16-36 (LTLIRLSIAIVFMWIGLLKFV). Residues 37–85 (PYEADSITPFVANSPLMSFFYEHPEDYKQYLTHEGEYKPEARAWQTANN) are Cytoplasmic-facing. Residues 86–106 (TYGFSNGLGVVEVIIALLVLA) form a helical membrane-spanning segment. The Periplasmic portion of the chain corresponds to 107–112 (NPVNRW). A helical transmembrane segment spans residues 113–133 (LGLLGGLMAFTTPLVTLSFLI). Residues 134–197 (TTPEAWVPAL…ESSSTLKTEY (64 aa)) lie on the Cytoplasmic side of the membrane.

It is found in the cell inner membrane. In terms of biological role, probably involved in reactive chlorine species (RCS) stress resistance. This is Inner membrane protein RclC (rclC) from Escherichia coli (strain K12).